The primary structure comprises 271 residues: uncharacterized protein (271 aa).

Helical transmembrane passes span 30–50, 189–209, and 218–238; these read IWFPIVVGIIASAVGMFGMLL, ALAAVIEELLVNIATAIYFLI, and FLVTVGSSLTYLSNIPMIFAC.

The protein localises to the cell membrane. This is an uncharacterized protein from Aquifex aeolicus (strain VF5).